A 118-amino-acid polypeptide reads, in one-letter code: p-cumate 2,3-dioxygenase system, ferredoxin component (118 aa).

In terms of domain architecture, Rieske spans 14-111 (VGLCATDDVA…VTVEGGQIFV (98 aa)). 4 residues coordinate [2Fe-2S] cluster: cysteine 54, histidine 56, cysteine 74, and histidine 77.

It belongs to the bacterial ring-hydroxylating dioxygenase ferredoxin component family. In terms of assembly, the p-cumate 2,3-dioxygenase multicomponent enzyme system is composed of an electron transfer component and a dioxygenase component (iron sulfur protein (ISP)). The electron transfer component is composed of a ferredoxin reductase (CmtAa) and a ferredoxin (CmtAd), and the dioxygenase component is formed of a large alpha subunit (CmtAb) and a small beta subunit (CmtAc). It depends on [2Fe-2S] cluster as a cofactor.

It participates in aromatic compound metabolism; p-cumate degradation; acetaldehyde and pyruvate from p-cumate. Its function is as follows. Component of the p-cumate 2,3-dioxygenase multicomponent enzyme system which catalyzes the incorporation of both atoms of molecular oxygen into p-cumate to form cis-2,3-dihydroxy-2,3-dihydro-p-cumate. Functions as an intermediate electron transfer protein via a specific interaction with iron sulfur protein components (ISP)(CmtAb and CmtAc). This chain is p-cumate 2,3-dioxygenase system, ferredoxin component, found in Pseudomonas putida (Arthrobacter siderocapsulatus).